A 427-amino-acid polypeptide reads, in one-letter code: MIDVKDLIEQPEKYRASQEARGEDASLVDRVVEADAARRSSIAGFEQLRAEQKAFGKRVAQAKGEEKQALLAEVKDLAARVKEAESAAGAAEARLAELQRAFPNLIVDGVPAGGEDDFVVLKEVGTPRDFAAEGFEPRDHLELGELLGAIDMERGAKVSGARFSFLTGVGARLELALMQLGLDLALENGFVPVIPPTLVRPETMQGTGFDVEHDDEIYRLERDDLYLVGTSEVALAGFHAGEIMDVSAPVRYAGWSTCYRREAGSAGKDTRGIIRVHQFNKLEMFIYAAQEDAEAEHARLLAWEERMLGAIEVPYRVIDIAAGDLGLSAARKFDCEAWVPTQGTYRELTSTSNCTTFQARRLNIRERVRTEDGSKGGTRMVATLNGTLATTRWIVAILENHQNADGSVTVPAALRPYLGGMERFELV.

230–232 (TSE) lines the L-serine pocket. Residues 260-262 (RRE) and Val276 contribute to the ATP site. Glu283 provides a ligand contact to L-serine. Residue 347–350 (ELTS) participates in ATP binding. Thr387 is an L-serine binding site.

Belongs to the class-II aminoacyl-tRNA synthetase family. Type-1 seryl-tRNA synthetase subfamily. As to quaternary structure, homodimer. The tRNA molecule binds across the dimer.

The protein resides in the cytoplasm. The enzyme catalyses tRNA(Ser) + L-serine + ATP = L-seryl-tRNA(Ser) + AMP + diphosphate + H(+). It catalyses the reaction tRNA(Sec) + L-serine + ATP = L-seryl-tRNA(Sec) + AMP + diphosphate + H(+). The protein operates within aminoacyl-tRNA biosynthesis; selenocysteinyl-tRNA(Sec) biosynthesis; L-seryl-tRNA(Sec) from L-serine and tRNA(Sec): step 1/1. Catalyzes the attachment of serine to tRNA(Ser). Is also able to aminoacylate tRNA(Sec) with serine, to form the misacylated tRNA L-seryl-tRNA(Sec), which will be further converted into selenocysteinyl-tRNA(Sec). The sequence is that of Serine--tRNA ligase from Micrococcus luteus (strain ATCC 4698 / DSM 20030 / JCM 1464 / CCM 169 / CCUG 5858 / IAM 1056 / NBRC 3333 / NCIMB 9278 / NCTC 2665 / VKM Ac-2230) (Micrococcus lysodeikticus).